The sequence spans 163 residues: COP9 signalosome complex subunit 9 (163 aa).

One can recognise a PCI domain in the interval 5–120 (EVLHAVLDPK…SVGRRIKVLR (116 aa)).

In terms of assembly, component of a COP9 signalosome-like (CSN) complex.

It is found in the cytoplasm. The protein resides in the nucleus. In terms of biological role, component of the COP9 signalosome (CSN) complex that acts as a regulator of the ubiquitin (Ubl) conjugation pathway by mediating the deneddylation of the cullin subunit of SCF-type E3 ubiquitin-protein ligase complexes. The complex is involved in the regulation of the mating pheromone response. The polypeptide is COP9 signalosome complex subunit 9 (CSN9) (Eremothecium gossypii (strain ATCC 10895 / CBS 109.51 / FGSC 9923 / NRRL Y-1056) (Yeast)).